The following is a 277-amino-acid chain: MDNAVDRHVFYISDGTAITAEVLGHAVMSQFPVAINSITLPFVENESRAKAVKEQIDAIFQQTGTRPLVFYSIVIPEIRDIILQSEGFCQDIVQALVAPLQGELKLDPTPIAHRTHGLNPGNLIKYDARIAAIDYTLAHDDGISMRNLDQAQVILLGVSRCGKTPTSLYLAMQFGIRAANYPFIADDMDNLVLPPALKPLQHKLFGLTINPERLAAIREERRENSRYASMRQCRMEVSEVEALYRKNQIPWLNSTNYSVEEIATKILDIMGLNRRMY.

Residue 157-164 (GVSRCGKT) participates in ADP binding.

This sequence belongs to the pyruvate, phosphate/water dikinase regulatory protein family. PSRP subfamily.

The catalysed reaction is [pyruvate, water dikinase] + ADP = [pyruvate, water dikinase]-phosphate + AMP + H(+). The enzyme catalyses [pyruvate, water dikinase]-phosphate + phosphate + H(+) = [pyruvate, water dikinase] + diphosphate. In terms of biological role, bifunctional serine/threonine kinase and phosphorylase involved in the regulation of the phosphoenolpyruvate synthase (PEPS) by catalyzing its phosphorylation/dephosphorylation. This is Putative phosphoenolpyruvate synthase regulatory protein from Enterobacter sp. (strain 638).